Reading from the N-terminus, the 358-residue chain is MRERLLAAEKIKAIEWRDGTLHLLDQRLLPQEERWLSYDSASGVAGAIRDMVVRGAPAIGISAAYGVLLGARRRLAAGGDWRAALEEDFRVLAESRPTAVNLFWALDRMRERLARLKDGEDALVALEAEAVGIHESDREANLTMAQLGLELIRKHSGSPQALLTHCNTGALATGGFGTALGVIRAAWLEGLVDRVYADETRPWLQGARLTAWELAEEGIPVSLNADGAAAHLMKTKGITWVIVGADRITAEGDVANKIGTYQLAVVAMHHGVRFMVVAPSSTIDMSLHSGEDIPIEERDGRELLEIGGKRVAASVEAVNPVFDVTPADLIDAIVTERGVVERPNAAKMAELMSRKRLH.

Substrate-binding positions include 54–56, arginine 96, and glutamine 205; that span reads RGA. Residue aspartate 246 is the Proton donor of the active site. Position 256-257 (256-257) interacts with substrate; that stretch reads NK.

This sequence belongs to the eIF-2B alpha/beta/delta subunits family. MtnA subfamily.

It catalyses the reaction 5-(methylsulfanyl)-alpha-D-ribose 1-phosphate = 5-(methylsulfanyl)-D-ribulose 1-phosphate. Its pathway is amino-acid biosynthesis; L-methionine biosynthesis via salvage pathway; L-methionine from S-methyl-5-thio-alpha-D-ribose 1-phosphate: step 1/6. Functionally, catalyzes the interconversion of methylthioribose-1-phosphate (MTR-1-P) into methylthioribulose-1-phosphate (MTRu-1-P). In Azotobacter vinelandii (strain DJ / ATCC BAA-1303), this protein is Methylthioribose-1-phosphate isomerase.